We begin with the raw amino-acid sequence, 1359 residues long: DNA-directed RNA polymerase subunit beta (1359 aa).

It belongs to the RNA polymerase beta chain family. As to quaternary structure, the RNAP catalytic core consists of 2 alpha, 1 beta, 1 beta' and 1 omega subunit. When a sigma factor is associated with the core the holoenzyme is formed, which can initiate transcription.

The catalysed reaction is RNA(n) + a ribonucleoside 5'-triphosphate = RNA(n+1) + diphosphate. Functionally, DNA-dependent RNA polymerase catalyzes the transcription of DNA into RNA using the four ribonucleoside triphosphates as substrates. This is DNA-directed RNA polymerase subunit beta from Nitrosomonas eutropha (strain DSM 101675 / C91 / Nm57).